A 153-amino-acid chain; its full sequence is Ribonuclease VapC6 (153 aa).

The PINc domain maps to 6-152 (VFIDSSVMVG…EKVDFIEIIK (147 aa)). Positions 9 and 120 each coordinate Mg(2+).

This sequence belongs to the PINc/VapC protein family. The cofactor is Mg(2+).

Toxic component of a type II toxin-antitoxin (TA) system. An RNase. This Methanocaldococcus jannaschii (strain ATCC 43067 / DSM 2661 / JAL-1 / JCM 10045 / NBRC 100440) (Methanococcus jannaschii) protein is Ribonuclease VapC6.